Here is a 368-residue protein sequence, read N- to C-terminus: Probable auxin efflux carrier component 5b (368 aa).

Helical transmembrane passes span 7-27 (VYKV…GYGS), 39-59 (CDAV…FDFA), 71-91 (VLAA…ACAA), 114-134 (CITG…VPLL), 145-165 (LIVQ…LLAF), 227-247 (VLGV…PSII), 251-271 (VLIM…LFMA), 286-306 (LGMA…AFAL), 312-332 (LLRL…FVFA), and 347-367 (IFGT…LGFI).

This sequence belongs to the auxin efflux carrier (TC 2.A.69.1) family. Expressed at low levels in roots and shoot apex.

The protein resides in the membrane. In terms of biological role, may act as a component of the auxin efflux carrier. In Oryza sativa subsp. japonica (Rice), this protein is Probable auxin efflux carrier component 5b.